Consider the following 883-residue polypeptide: Alanine--tRNA ligase (883 aa).

Zn(2+) contacts are provided by His-563, His-567, Cys-677, and His-681.

The protein belongs to the class-II aminoacyl-tRNA synthetase family. Zn(2+) is required as a cofactor.

The protein resides in the cytoplasm. The catalysed reaction is tRNA(Ala) + L-alanine + ATP = L-alanyl-tRNA(Ala) + AMP + diphosphate. In terms of biological role, catalyzes the attachment of alanine to tRNA(Ala) in a two-step reaction: alanine is first activated by ATP to form Ala-AMP and then transferred to the acceptor end of tRNA(Ala). Also edits incorrectly charged Ser-tRNA(Ala) and Gly-tRNA(Ala) via its editing domain. The polypeptide is Alanine--tRNA ligase (Cereibacter sphaeroides (strain ATCC 17023 / DSM 158 / JCM 6121 / CCUG 31486 / LMG 2827 / NBRC 12203 / NCIMB 8253 / ATH 2.4.1.) (Rhodobacter sphaeroides)).